The chain runs to 622 residues: Cilia- and flagella-associated protein 206 (622 aa).

A disordered region spans residues 570–592; that stretch reads SQVYPPKDTSTQSMREDSTGVPR.

Belongs to the CFAP206 family.

Its subcellular location is the cytoplasm. It localises to the cytoskeleton. It is found in the cilium axoneme. The protein resides in the cilium basal body. In terms of biological role, essential for sperm motility and is involved in the regulation of the beating frequency of motile cilia on the epithelial cells of the respiratory tract. Required for the establishment of radial spokes in sperm flagella. This is Cilia- and flagella-associated protein 206 from Homo sapiens (Human).